The chain runs to 596 residues: Elongation factor 4 (596 aa).

The region spanning 2–184 (DHIRNFSIIA…AVVARIPPPK (183 aa)) is the tr-type G domain. GTP-binding positions include 14 to 19 (DHGKST) and 131 to 134 (NKID).

Belongs to the TRAFAC class translation factor GTPase superfamily. Classic translation factor GTPase family. LepA subfamily.

It localises to the cell inner membrane. The catalysed reaction is GTP + H2O = GDP + phosphate + H(+). Functionally, required for accurate and efficient protein synthesis under certain stress conditions. May act as a fidelity factor of the translation reaction, by catalyzing a one-codon backward translocation of tRNAs on improperly translocated ribosomes. Back-translocation proceeds from a post-translocation (POST) complex to a pre-translocation (PRE) complex, thus giving elongation factor G a second chance to translocate the tRNAs correctly. Binds to ribosomes in a GTP-dependent manner. In Dechloromonas aromatica (strain RCB), this protein is Elongation factor 4.